A 931-amino-acid chain; its full sequence is MTLAPADLPVSLQPLVDRALARLAQVLTEPIPADLLPLLTRLAVASDFALDTLVRQPALLAQLAAPGCPPIPAPVLDPLQPSDWPAQLRRWRAAMSTRLIWRDLAGLDDVAQTLAGATTLAEDCLRLALEALQQEFAQRHGVIADDQGTPQQLVVFGLGKLGGGELNFSSDIDLVYAYPHGGESDGPRALAAEEYFARLGQRLAKLLDETTVDGFSHRVDLRLRPFGSAGRVALSFAAMDQYFQREGRDWERYAWLKARAVAGDIAAGEAWLQTLRPFVYRRYLDFTALDGLREMKAAITAEVARRELHEDIKRGAGGIREIEFLCQALQLIRGGREPALRERRLLVALDALVAAGQIAPEDGSALREAYLFLRRLENRLQMLRDAQTHVLPSDALDRERIAVGLGYADWNVLRAALAEQQQRVSTEFAALLAPRKGQAAPDALANYWRSLPEGSNAPLLAEAGFLDANGADQSLRDFAQGTGVKSLSDAARARLDRVLPALLHAATRSPQPDAALKRVLGLLQAVLRRTSYLALLDEQPSALARLVDVLARSALLAERLAAYPLLLDELLDVRVSGPMPDAAGMLAECQQVLAVEDPESALRWLNETRLALSFRMAMATLDGRQGAVDSTRQLAELAQAVVVTVLAMAEADMHAAHGGIPGGRFAIIGYGSLGGLELGFGSDLDLVFLHDNPAGVDASDGARPLEPGRWYARLAQKVMALLGAVTAAGRLYDIDVRLRPDGGKGSLVSSLASYTEYQRERAWTWEHQALVRARGVAGDASLLADFEQVRAQTLGRERDTGVLYADVLKMRGRMRTELDRSDAARLDLKQGAGGVVDLEFLLQTGVLARSAQHAALLQPRDTPSLIDALAVAGFLPDATAQALHGAHATLLDVGLACTLDRRPRLAPTTPAIEEACAAITAACRAAELPFA.

The adenylyl removase stretch occupies residues 1–434 (MTLAPADLPV…STEFAALLAP (434 aa)). The segment at 441–931 (PDALANYWRS…ACRAAELPFA (491 aa)) is adenylyl transferase.

Belongs to the GlnE family. Mg(2+) is required as a cofactor.

It carries out the reaction [glutamine synthetase]-O(4)-(5'-adenylyl)-L-tyrosine + phosphate = [glutamine synthetase]-L-tyrosine + ADP. The enzyme catalyses [glutamine synthetase]-L-tyrosine + ATP = [glutamine synthetase]-O(4)-(5'-adenylyl)-L-tyrosine + diphosphate. Involved in the regulation of glutamine synthetase GlnA, a key enzyme in the process to assimilate ammonia. When cellular nitrogen levels are high, the C-terminal adenylyl transferase (AT) inactivates GlnA by covalent transfer of an adenylyl group from ATP to specific tyrosine residue of GlnA, thus reducing its activity. Conversely, when nitrogen levels are low, the N-terminal adenylyl removase (AR) activates GlnA by removing the adenylyl group by phosphorolysis, increasing its activity. The regulatory region of GlnE binds the signal transduction protein PII (GlnB) which indicates the nitrogen status of the cell. The protein is Bifunctional glutamine synthetase adenylyltransferase/adenylyl-removing enzyme of Stenotrophomonas maltophilia (strain K279a).